The primary structure comprises 338 residues: 2-methyl-6-phytyl-1,4-hydroquinone methyltransferase, chloroplastic (338 aa).

The N-terminal 51 residues, M1 to S51, are a transit peptide targeting the chloroplast. At S52–R307 the chain is on the chloroplast intermembrane side. Residues V114–F123 form an SAM motif I region. The SAM motif II stretch occupies residues C159–P172. Residues R200–P213 form an SAM motif III region. Residues F308–K328 form a helical membrane-spanning segment. Residues D329–I338 lie on the Stromal side of the membrane.

It belongs to the class I-like SAM-binding methyltransferase superfamily. MPBQ/MBSQ MT family.

It is found in the plastid. The protein resides in the chloroplast inner membrane. It carries out the reaction 2-methyl-6-phytyl-1,4-benzene-1,4-diol + S-adenosyl-L-methionine = 2,3-dimethyl-6-phytylbenzene-1,4-diol + S-adenosyl-L-homocysteine + H(+). It catalyses the reaction 2-methyl-6-(all-trans-nonaprenyl)benzene-1,4-diol + S-adenosyl-L-methionine = plastoquinol-9 + S-adenosyl-L-homocysteine + H(+). The enzyme catalyses 6-geranylgeranyl-2-methylbenzene-1,4-diol + S-adenosyl-L-methionine = 6-geranylgeranyl-2,3-dimethylbenzene-1,4-diol + S-adenosyl-L-homocysteine + H(+). It functions in the pathway cofactor biosynthesis; tocopherol biosynthesis. Its function is as follows. Involved in a key methylation step in both tocopherols (vitamin E) and plastoquinone synthesis. Catalyzes the conversion of 2-methyl-6-phytyl-1,4-hydroquinone (MPBQ) to 2,3-dimethyl-6-phytyl-1,4-hydroquinone (DMPQ, a substrate for tocopherol cyclase), and 2-methyl-6-solanyl-1,4-benzoquinone (MSBQ) to plastoquinone. The sequence is that of 2-methyl-6-phytyl-1,4-hydroquinone methyltransferase, chloroplastic (VTE3) from Arabidopsis thaliana (Mouse-ear cress).